Reading from the N-terminus, the 463-residue chain is MPTILYNTNSSLITKYRRPNASNQYKGFLSKKGHTRLNSKSSGDIWEKDCSHTKNSGNDVSFESEFEKDSVEYLRDLCFSIYPNSLHQKIRSIEALPDLQVNTFIALIFQNFVKSWYGIKIPTDDSKFLTELYNLVQDLITYLKSSKINYHALLLDYIPCLLSSHLKALNDSSQNNDLVYEQYCKLTLYDSKRYPMLFTEIIQSKMSTKSLLQRSFLDSFLNELVFGHIFNSIAEPYYLLEGLNKICIRIKLNSAGNTRNEVTHGKPKCDPWLFVSNVKHKILQMTRLLAYSTSTEAANMNTAEIQETAFLQRYIFTFFTDDFFKLSMRKPFLFSICRTLQHWISKLNALNRVMYRTFDNIVQTKITSPVTIGNLFSLLRHSLFPNDNMMGPPRVLPVGDAFLEFREECISNLWDVCMTYKLDHILAIKRSDIADLIICISKNRDCNKLLIYRIIDCVIAQLP.

This is an uncharacterized protein from Saccharomyces cerevisiae (strain ATCC 204508 / S288c) (Baker's yeast).